The primary structure comprises 358 residues: Alanine racemase (358 aa).

Lys-35 functions as the Proton acceptor; specific for D-alanine in the catalytic mechanism. Lys-35 carries the post-translational modification N6-(pyridoxal phosphate)lysine. Arg-130 is a substrate binding site. Catalysis depends on Tyr-255, which acts as the Proton acceptor; specific for L-alanine. A substrate-binding site is contributed by Met-303.

It belongs to the alanine racemase family. Pyridoxal 5'-phosphate serves as cofactor.

The enzyme catalyses L-alanine = D-alanine. Its pathway is amino-acid biosynthesis; D-alanine biosynthesis; D-alanine from L-alanine: step 1/1. In terms of biological role, catalyzes the interconversion of L-alanine and D-alanine. May also act on other amino acids. The chain is Alanine racemase (alr) from Shewanella woodyi (strain ATCC 51908 / MS32).